The following is a 119-amino-acid chain: Basic phospholipase A2 DE-1 (119 aa).

Disulfide bonds link Cys11–Cys71, Cys26–Cys118, Cys28–Cys44, Cys43–Cys99, Cys50–Cys92, Cys60–Cys85, and Cys78–Cys90. Residues Tyr27, Gly29, Gly31, and Asp48 each coordinate Ca(2+). Asp93 is a catalytic residue.

This sequence belongs to the phospholipase A2 family. Group I subfamily. D49 sub-subfamily. The cofactor is Ca(2+). Expressed by the venom gland.

Its subcellular location is the secreted. It carries out the reaction a 1,2-diacyl-sn-glycero-3-phosphocholine + H2O = a 1-acyl-sn-glycero-3-phosphocholine + a fatty acid + H(+). Its function is as follows. PLA2 catalyzes the calcium-dependent hydrolysis of the 2-acyl groups in 3-sn-phosphoglycerides. The sequence is that of Basic phospholipase A2 DE-1 from Hemachatus haemachatus (Rinkhals).